The following is a 347-amino-acid chain: N-acetyl-gamma-glutamyl-phosphate reductase (347 aa).

The active site involves C151.

It belongs to the NAGSA dehydrogenase family. Type 1 subfamily.

The protein localises to the cytoplasm. It catalyses the reaction N-acetyl-L-glutamate 5-semialdehyde + phosphate + NADP(+) = N-acetyl-L-glutamyl 5-phosphate + NADPH + H(+). The protein operates within amino-acid biosynthesis; L-arginine biosynthesis; N(2)-acetyl-L-ornithine from L-glutamate: step 3/4. In terms of biological role, catalyzes the NADPH-dependent reduction of N-acetyl-5-glutamyl phosphate to yield N-acetyl-L-glutamate 5-semialdehyde. In Pelotomaculum thermopropionicum (strain DSM 13744 / JCM 10971 / SI), this protein is N-acetyl-gamma-glutamyl-phosphate reductase.